The primary structure comprises 580 residues: NADH-quinone oxidoreductase subunit C/D (580 aa).

An NADH dehydrogenase I subunit C region spans residues 1 to 171; it reads MSFDQVIADA…PPFVLTDRLF (171 aa). Positions 195–580 are NADH dehydrogenase I subunit D; the sequence is ELMVLNFGPH…IDFVMSDVDR (386 aa).

It in the N-terminal section; belongs to the complex I 30 kDa subunit family. This sequence in the C-terminal section; belongs to the complex I 49 kDa subunit family. As to quaternary structure, NDH-1 is composed of 13 different subunits. Subunits NuoB, CD, E, F, and G constitute the peripheral sector of the complex.

The protein resides in the cell inner membrane. The catalysed reaction is a quinone + NADH + 5 H(+)(in) = a quinol + NAD(+) + 4 H(+)(out). In terms of biological role, NDH-1 shuttles electrons from NADH, via FMN and iron-sulfur (Fe-S) centers, to quinones in the respiratory chain. The immediate electron acceptor for the enzyme in this species is believed to be ubiquinone. Couples the redox reaction to proton translocation (for every two electrons transferred, four hydrogen ions are translocated across the cytoplasmic membrane), and thus conserves the redox energy in a proton gradient. The protein is NADH-quinone oxidoreductase subunit C/D of Cereibacter sphaeroides (strain ATCC 17025 / ATH 2.4.3) (Rhodobacter sphaeroides).